An 85-amino-acid chain; its full sequence is Arminin 6494 (85 aa).

The N-terminal stretch at 1-18 (MKTVFAILFLAFIALTYA) is a signal peptide. Residues 19–57 (RSYEDVKEEIKNEVEKEILEDLEEESDELNDKRKEINDA) constitute a propeptide that is removed on maturation. At Ala-82 the chain carries Alanine amide.

The protein belongs to the arminin family. In terms of tissue distribution, expressed in entodermal epithelium along the body column.

It is found in the secreted. The protein resides in the target cell membrane. Its function is as follows. Antimicrobial peptide with a broad-spectrum antimicrobial activity. Keeps its antibacterial activity under a wide range of salt concentrations that mimic physiological conditions of human blood, which is surprising, since Hydra is an obligate freshwater animal with nearly no salt tolerance. Does not affect red blood cells. This Hydra vulgaris (Hydra) protein is Arminin 6494.